The primary structure comprises 1427 residues: Protein expanded (1427 aa).

One can recognise an FERM domain in the interval 26–399; it reads RFLALRLLGQ…DTHQWSMKLA (374 aa). Residues 176–212 are disordered; that stretch reads GDAPPGTSNSKDDSGEETSASPSNGGRGLSATTTLPK. Over residues 192 to 211 the composition is skewed to polar residues; that stretch reads ETSASPSNGGRGLSATTTLP. Phosphotyrosine occurs at positions 227 and 423. 2 disordered regions span residues 520–566 and 611–656; these read VRPQ…IGSQ and NSAL…SGVY. Polar residues predominate over residues 524–544; that stretch reads DASSNGATIVTNSSVQRNSMG. Over residues 545–559 the composition is skewed to low complexity; sequence TTANDSSTATDSPSS. Residue tyrosine 679 is modified to Phosphotyrosine. Positions 688-710 are enriched in basic and acidic residues; the sequence is EETHVQHSDSVDGKKKEDFRPRS. 5 disordered regions span residues 688–732, 766–792, 815–880, 939–963, and 1000–1022; these read EETH…DNKH, YVTL…YSAR, APKP…SLKS, HNSN…HRHS, and LAPP…HPHL. The residue at position 766 (tyrosine 766) is a Phosphotyrosine. Residues 818 to 838 are compositionally biased toward pro residues; that stretch reads PDSPPCSPPVPPAPIPAPPPA. Positions 842–847 match the RXPPXY motif motif; sequence RDPPPY. Residues 848–859 show a composition bias toward polar residues; that stretch reads SISSKPRPTSLI. The segment covering 860–877 has biased composition (low complexity); the sequence is SVSSSAHPAPSAAGSMSS. Over residues 951 to 963 the composition is skewed to basic residues; sequence LHHHHVPSHHRHS. Residues 1001-1019 show a composition bias toward pro residues; it reads APPPPSLPRQPPPPPPPNH. The SH3-binding signature appears at 1008-1020; that stretch reads PRQPPPPPPPNHP. Tyrosine 1103 is modified (phosphotyrosine). The short motif at 1149–1157 is the SH3-binding element; the sequence is PPPPPPLHP. Residue serine 1181 is modified to Phosphoserine. 2 disordered regions span residues 1190-1267 and 1345-1398; these read DLLP…WAGE and TGQE…LPVQ. Pro residues-rich tracts occupy residues 1214 to 1230 and 1237 to 1246; these read PPMP…PSKP and PIPPRKPPTL. 2 stretches are compositionally biased toward polar residues: residues 1253–1262 and 1345–1370; these read SPLTKTSSGA and TGQE…SSAG. The span at 1376-1388 shows a compositional bias: basic residues; that stretch reads KARKGSTVSHRHP.

Forms a complex with Kibra and Mer. Interacts (via RXPPXY motif) with Kibra (via domain WW 1). Interacts with Mer and Hpo (via SARAH domain). Interacts with Schip1; the interaction results in recruitment of Schip1 to the apical cell membrane. Interacts with ack and yki. In terms of processing, phosphorylated by Ack at several tyrosines including Tyr-227, Tyr-423, Tyr-679, Tyr-766 and Tyr-1103.

It is found in the apical cell membrane. Its function is as follows. Activates the Hippo/SWH (Sav/Wts/Hpo) signaling pathway, a signaling pathway that plays a pivotal role in organ size control and tumor suppression by restricting proliferation and promoting apoptosis. The core of this pathway is composed of a kinase cascade wherein Hippo (Hpo), in complex with its regulatory protein Salvador (Sav), phosphorylates and activates Warts (Wts) in complex with its regulatory protein Mats, which in turn phosphorylates and inactivates the Yorkie (Yki) oncoprotein. Ex acts synergistically along with Mer and Kibra to regulate the Hippo signaling pathway. Involved in the control of cell proliferation in imaginal disks. May bind to certain proteins of signal transduction pathways by interaction with their SH3 domains. Required for apical localization of Schip1. The chain is Protein expanded (ex) from Drosophila melanogaster (Fruit fly).